Reading from the N-terminus, the 96-residue chain is Co-chaperonin GroES (96 aa).

It belongs to the GroES chaperonin family. Heptamer of 7 subunits arranged in a ring. Interacts with the chaperonin GroEL.

The protein resides in the cytoplasm. In terms of biological role, together with the chaperonin GroEL, plays an essential role in assisting protein folding. The GroEL-GroES system forms a nano-cage that allows encapsulation of the non-native substrate proteins and provides a physical environment optimized to promote and accelerate protein folding. GroES binds to the apical surface of the GroEL ring, thereby capping the opening of the GroEL channel. The chain is Co-chaperonin GroES from Alcanivorax borkumensis (strain ATCC 700651 / DSM 11573 / NCIMB 13689 / SK2).